The chain runs to 288 residues: Ribosomal RNA small subunit methyltransferase A (288 aa).

The S-adenosyl-L-methionine site is built by Asn-28, Leu-30, Gly-55, Glu-76, Asp-101, and Asn-130.

The protein belongs to the class I-like SAM-binding methyltransferase superfamily. rRNA adenine N(6)-methyltransferase family. RsmA subfamily.

Its subcellular location is the cytoplasm. The enzyme catalyses adenosine(1518)/adenosine(1519) in 16S rRNA + 4 S-adenosyl-L-methionine = N(6)-dimethyladenosine(1518)/N(6)-dimethyladenosine(1519) in 16S rRNA + 4 S-adenosyl-L-homocysteine + 4 H(+). In terms of biological role, specifically dimethylates two adjacent adenosines (A1518 and A1519) in the loop of a conserved hairpin near the 3'-end of 16S rRNA in the 30S particle. May play a critical role in biogenesis of 30S subunits. The protein is Ribosomal RNA small subunit methyltransferase A of Moorella thermoacetica (strain ATCC 39073 / JCM 9320).